A 480-amino-acid chain; its full sequence is NADH-quinone oxidoreductase subunit N (480 aa).

A run of 13 helical transmembrane segments spans residues 5-25 (NFLC…LFLY), 40-60 (IAIV…FTMY), 69-89 (ISSQ…FLVF), 110-130 (VIML…NFVM), 162-182 (YILT…FLYG), 204-224 (LGFV…PFHL), 237-257 (VTAY…IFVL), 266-286 (LIWN…GNLF), 296-316 (FFAF…IAGT), 324-344 (IFYT…IASV), 368-388 (AFVM…AGFF), 404-424 (ILVF…LLIV), and 450-470 (MVIC…YEYI).

This sequence belongs to the complex I subunit 2 family. In terms of assembly, NDH-1 is composed of 14 different subunits. Subunits NuoA, H, J, K, L, M, N constitute the membrane sector of the complex.

It is found in the cell inner membrane. The enzyme catalyses a quinone + NADH + 5 H(+)(in) = a quinol + NAD(+) + 4 H(+)(out). Its function is as follows. NDH-1 shuttles electrons from NADH, via FMN and iron-sulfur (Fe-S) centers, to quinones in the respiratory chain. The immediate electron acceptor for the enzyme in this species is believed to be a menaquinone. Couples the redox reaction to proton translocation (for every two electrons transferred, four hydrogen ions are translocated across the cytoplasmic membrane), and thus conserves the redox energy in a proton gradient. The protein is NADH-quinone oxidoreductase subunit N of Azobacteroides pseudotrichonymphae genomovar. CFP2.